The chain runs to 187 residues: ATP synthase subunit b, chloroplastic (187 aa).

The chain crosses the membrane as a helical span at residues 34 to 56 (LINLAAVIGLLFYSGRSFLTNLL).

This sequence belongs to the ATPase B chain family. F-type ATPases have 2 components, F(1) - the catalytic core - and F(0) - the membrane proton channel. F(1) has five subunits: alpha(3), beta(3), gamma(1), delta(1), epsilon(1). F(0) has four main subunits: a(1), b(1), b'(1) and c(10-14). The alpha and beta chains form an alternating ring which encloses part of the gamma chain. F(1) is attached to F(0) by a central stalk formed by the gamma and epsilon chains, while a peripheral stalk is formed by the delta, b and b' chains.

The protein resides in the plastid. It localises to the chloroplast thylakoid membrane. Its function is as follows. F(1)F(0) ATP synthase produces ATP from ADP in the presence of a proton or sodium gradient. F-type ATPases consist of two structural domains, F(1) containing the extramembraneous catalytic core and F(0) containing the membrane proton channel, linked together by a central stalk and a peripheral stalk. During catalysis, ATP synthesis in the catalytic domain of F(1) is coupled via a rotary mechanism of the central stalk subunits to proton translocation. Functionally, component of the F(0) channel, it forms part of the peripheral stalk, linking F(1) to F(0). The chain is ATP synthase subunit b, chloroplastic from Chlorokybus atmophyticus (Soil alga).